A 275-amino-acid polypeptide reads, in one-letter code: MRMTSSSFVSYCTPGLCQFMAMLPTAGHLLPLLLVIGTGGTVPSPQVPPRGCYVAKEAGERTFRCSQAGLSAVPSGIPNDTRKLYLDANQLASVPAGAFQHLPVLEELDLSHNALAHLSGAAFQGLEGTLRHLDLSANQLASVPVEAFVGLQIQVNLSANPWHCDCALQEVLRQVRLVPGTGTGIVCGSGARPDLVGQEFLLLAGEEELCGSGWGGARRSTDVALLVTMGGWLTLMVAYLVHYVWQNRDETRRSLKRAPVLPVRSEDSSILSTVV.

The signal sequence occupies residues 1–41 (MRMTSSSFVSYCTPGLCQFMAMLPTAGHLLPLLLVIGTGGT). In terms of domain architecture, LRRNT spans 42 to 79 (VPSPQVPPRGCYVAKEAGERTFRCSQAGLSAVPSGIPN). LRR repeat units lie at residues 80–101 (DTRKLYLDANQLASVPAGAFQH), 104–125 (VLEELDLSHNALAHLSGAAFQG), and 129–150 (TLRHLDLSANQLASVPVEAFVG). N-linked (GlcNAc...) asparagine glycosylation occurs at asparagine 156. Residues 160–212 (NPWHCDCALQEVLRQVRLVPGTGTGIVCGSGARPDLVGQEFLLLAGEEELCGS) enclose the LRRCT domain. The helical transmembrane segment at 225–245 (LLVTMGGWLTLMVAYLVHYVW) threads the bilayer.

This sequence belongs to the LRRC3 family.

It localises to the membrane. The protein is Leucine-rich repeat-containing protein 3C (LRRC3C) of Homo sapiens (Human).